The following is a 140-amino-acid chain: Fluoride-specific ion channel FluC 2 (140 aa).

4 helical membrane passes run 7 to 27 (VPPL…LGAL), 45 to 65 (WATF…MVLV), 77 to 97 (PFAG…GLEI), and 106 to 126 (VLEA…GVVL). Na(+)-binding residues include Gly-85 and Thr-88.

Belongs to the fluoride channel Fluc/FEX (TC 1.A.43) family.

Its subcellular location is the cell membrane. It carries out the reaction fluoride(in) = fluoride(out). Its activity is regulated as follows. Na(+) is not transported, but it plays an essential structural role and its presence is essential for fluoride channel function. Functionally, fluoride-specific ion channel. Important for reducing fluoride concentration in the cell, thus reducing its toxicity. This Nocardia farcinica (strain IFM 10152) protein is Fluoride-specific ion channel FluC 2.